Consider the following 104-residue polypeptide: Large ribosomal subunit protein uL15z (104 aa).

It belongs to the universal ribosomal protein uL15 family.

The chain is Large ribosomal subunit protein uL15z (RPL27AA) from Arabidopsis thaliana (Mouse-ear cress).